We begin with the raw amino-acid sequence, 887 residues long: Exosome complex component 10 (887 aa).

The segment covering methionine 1–glutamine 10 has biased composition (basic and acidic residues). Positions methionine 1–glutamate 23 are disordered. Lysine 19 participates in a covalent cross-link: Glycyl lysine isopeptide (Lys-Gly) (interchain with G-Cter in SUMO2). The region spanning histidine 289 to leucine 455 is the 3'-5' exonuclease domain. 4 residues coordinate Mg(2+): aspartate 313, glutamate 315, aspartate 371, and aspartate 440. Residues asparagine 503–lysine 583 form the HRDC domain. A Glycyl lysine isopeptide (Lys-Gly) (interchain with G-Cter in SUMO1); alternate cross-link involves residue lysine 583. Residue lysine 583 forms a Glycyl lysine isopeptide (Lys-Gly) (interchain with G-Cter in SUMO2); alternate linkage. Residue lysine 710 forms a Glycyl lysine isopeptide (Lys-Gly) (interchain with G-Cter in SUMO2) linkage. Disordered regions lie at residues lysine 734–glutamate 757 and asparagine 777–arginine 887. A compositionally biased stretch (basic and acidic residues) spans alanine 778 to glutamine 796. Serine 823 bears the Phosphoserine mark. Glycyl lysine isopeptide (Lys-Gly) (interchain with G-Cter in SUMO2) cross-links involve residues lysine 835, lysine 861, and lysine 875.

The protein belongs to the exosome component 10/RRP6 family. As to quaternary structure, component of the RNA exosome complex. The catalytically inactive RNA exosome core complex (Exo-9) associates with the catalytic subunit EXOSC10/RRP6 (via its N-terminus). Exo-9 may associate with DIS3 to form the nucleolar exosome complex, or DIS3L to form the cytoplasmic exosome complex. The RNA exosome complex interacts with cofactors C1D/RRP47, MPHOSPH6/MPP6 and MTREX/MTR4. Interacts with MTREX; the interaction with MTREX mediates the association of MTREX with nuclear RNA exosomes. Part of the small subunit (SSU) processome, composed of more than 70 proteins and the RNA chaperone small nucleolar RNA (snoRNA) U3. Interacts with ALYREF/THOC4. Interacts with DHX36; this interaction occurs in a RNase-insensitive manner. Interacts with NRDE2. Interacts (via C-terminus) with USP36 (via C-terminus); the interaction is facilitated by the association with RNA and promotes sumoylation of EXOSC10. The cofactor is Mg(2+). Post-translationally, sumoylated by USP36; sumoylation does not significantly affect EXOSC10 nucleolar localization and association with core exosome and USP36, but regulates the nucleolar RNA exosome activity in rRNA processing by promoting binding of EXOSC10 to pre-rRNAs. Effects of sumoylation on EXOSC10 levels vary between different studies. Sumoylation of EXOSC10 is required for the modulation of EXOSC10 effects on cellular protein translation and cell proliferation. Sumoylation is promoted by mild hypothermia. Expressed in ovary (at protein level). Expressed in testis (at protein level). Expressed in lung (at protein level).

It is found in the cytoplasm. The protein localises to the nucleus. The protein resides in the nucleolus. Its subcellular location is the nucleoplasm. Functionally, catalytic component of the RNA exosome complex which has 3'-&gt;5' exoribonuclease activity and participates in a multitude of cellular RNA processing and degradation events. In the nucleus, the RNA exosome complex is involved in proper maturation of stable RNA species such as rRNA, snRNA and snoRNA, in the elimination of RNA processing by-products and non-coding 'pervasive' transcripts, such as antisense RNA species and promoter-upstream transcripts (PROMPTs), and of mRNAs with processing defects, thereby limiting or excluding their export to the cytoplasm. Part of the small subunit (SSU) processome, first precursor of the small eukaryotic ribosomal subunit. During the assembly of the SSU processome in the nucleolus, many ribosome biogenesis factors, an RNA chaperone and ribosomal proteins associate with the nascent pre-rRNA and work in concert to generate RNA folding, modifications, rearrangements and cleavage as well as targeted degradation of pre-ribosomal RNA by the RNA exosome. The RNA exosome may be involved in Ig class switch recombination (CSR) and/or Ig variable region somatic hypermutation (SHM) by targeting AICDA deamination activity to transcribed dsDNA substrates. In the cytoplasm, the RNA exosome complex is involved in general mRNA turnover and specifically degrades inherently unstable mRNAs containing AU-rich elements (AREs) within their 3' untranslated regions, and in RNA surveillance pathways, preventing translation of aberrant mRNAs. It seems to be involved in degradation of histone mRNA. EXOSC10 is required for nucleolar localization of C1D and probably mediates the association of MTREX, C1D and MPHOSPH6 with the RNA exosome involved in the maturation of 5.8S rRNA. Plays a role in the recruitment of replication protein A complex (RPA) and RAD51 to DNA double-strand breaks caused by irradiation, contributing to DNA repair by homologous recombination. Regulates levels of damage-induced RNAs in order to prevent DNA-RNA hybrid formation at DNA double-strand breaks and limit DNA end resection after damage. Plays a role in oocyte development, maturation and survival. Required for normal testis development and mitotic division of spermatogonia. Plays a role in proper embryo development. Required for global protein translation. Required for cell proliferation. The sequence is that of Exosome complex component 10 (Exosc10) from Mus musculus (Mouse).